We begin with the raw amino-acid sequence, 375 residues long: Succinyl-diaminopimelate desuccinylase (375 aa).

H66 is a Zn(2+) binding site. D68 is an active-site residue. Residue D99 coordinates Zn(2+). Residue E133 is the Proton acceptor of the active site. 3 residues coordinate Zn(2+): E134, E162, and H348.

This sequence belongs to the peptidase M20A family. DapE subfamily. As to quaternary structure, homodimer. Zn(2+) is required as a cofactor. It depends on Co(2+) as a cofactor.

The enzyme catalyses N-succinyl-(2S,6S)-2,6-diaminopimelate + H2O = (2S,6S)-2,6-diaminopimelate + succinate. Its pathway is amino-acid biosynthesis; L-lysine biosynthesis via DAP pathway; LL-2,6-diaminopimelate from (S)-tetrahydrodipicolinate (succinylase route): step 3/3. Its function is as follows. Catalyzes the hydrolysis of N-succinyl-L,L-diaminopimelic acid (SDAP), forming succinate and LL-2,6-diaminopimelate (DAP), an intermediate involved in the bacterial biosynthesis of lysine and meso-diaminopimelic acid, an essential component of bacterial cell walls. This is Succinyl-diaminopimelate desuccinylase from Aeromonas hydrophila subsp. hydrophila (strain ATCC 7966 / DSM 30187 / BCRC 13018 / CCUG 14551 / JCM 1027 / KCTC 2358 / NCIMB 9240 / NCTC 8049).